We begin with the raw amino-acid sequence, 45 residues long: MVSSAQLDFNLQALLGQLSQDDLCKFKSLIRTVSLGNELQKIPQT.

As to expression, expressed in all tissues tested, including spleen, lymph node, thymus, tonsil, peripheral blood leukocyte, bone marrow, liver, heart, brain, placenta, lung, skeletal muscle, kidney and pancreas.

It localises to the cytoplasm. The protein localises to the nucleus. Its function is as follows. May function as a negative regulator of NF-kappa-B by preventing RELA/p65 phosphorylation at 'Ser-536', thereby inhibiting its transcriptional activity. Through NF-kappa-B regulation may control cytokine release upon Toll-like receptors activation and therefore play a role in modulation of innate immunity. May also play a role in cell cycle progression and apoptotic process. The sequence is that of NLR family pyrin domain-containing protein 2B from Homo sapiens (Human).